Reading from the N-terminus, the 304-residue chain is Aspartate carbamoyltransferase catalytic subunit (304 aa).

Residues arginine 55 and threonine 56 each coordinate carbamoyl phosphate. Lysine 83 is a binding site for L-aspartate. Residues arginine 105, histidine 133, and glutamine 136 each contribute to the carbamoyl phosphate site. Residues arginine 166 and arginine 220 each contribute to the L-aspartate site. 2 residues coordinate carbamoyl phosphate: glycine 261 and proline 262.

The protein belongs to the aspartate/ornithine carbamoyltransferase superfamily. ATCase family. Heterododecamer (2C3:3R2) of six catalytic PyrB chains organized as two trimers (C3), and six regulatory PyrI chains organized as three dimers (R2).

The enzyme catalyses carbamoyl phosphate + L-aspartate = N-carbamoyl-L-aspartate + phosphate + H(+). It functions in the pathway pyrimidine metabolism; UMP biosynthesis via de novo pathway; (S)-dihydroorotate from bicarbonate: step 2/3. In terms of biological role, catalyzes the condensation of carbamoyl phosphate and aspartate to form carbamoyl aspartate and inorganic phosphate, the committed step in the de novo pyrimidine nucleotide biosynthesis pathway. This Caldanaerobacter subterraneus subsp. tengcongensis (strain DSM 15242 / JCM 11007 / NBRC 100824 / MB4) (Thermoanaerobacter tengcongensis) protein is Aspartate carbamoyltransferase catalytic subunit.